Reading from the N-terminus, the 147-residue chain is Small ribosomal subunit protein uS12 (147 aa).

This sequence belongs to the universal ribosomal protein uS12 family. In terms of assembly, part of the 30S ribosomal subunit.

Functionally, with S4 and S5 plays an important role in translational accuracy. Located at the interface of the 30S and 50S subunits. In Saccharolobus solfataricus (strain ATCC 35092 / DSM 1617 / JCM 11322 / P2) (Sulfolobus solfataricus), this protein is Small ribosomal subunit protein uS12.